A 750-amino-acid chain; its full sequence is uncharacterized protein (750 aa).

3 helical membrane-spanning segments follow: residues Met1–Thr21, Tyr465–Leu485, and Gly586–Ser606.

Its subcellular location is the membrane. This is an uncharacterized protein from Saccharomyces cerevisiae (strain ATCC 204508 / S288c) (Baker's yeast).